A 591-amino-acid polypeptide reads, in one-letter code: Aspartate--tRNA(Asp/Asn) ligase (591 aa).

Glutamate 174 is a binding site for L-aspartate. Residues 198–201 (QLFK) are aspartate. Residue arginine 220 coordinates L-aspartate. Residues 220 to 222 (RDE) and glutamine 229 each bind ATP. Histidine 450 serves as a coordination point for L-aspartate. Glutamate 483 serves as a coordination point for ATP. Arginine 490 is an L-aspartate binding site. ATP is bound at residue 535–538 (GLDR).

Belongs to the class-II aminoacyl-tRNA synthetase family. Type 1 subfamily. In terms of assembly, homodimer.

Its subcellular location is the cytoplasm. The enzyme catalyses tRNA(Asx) + L-aspartate + ATP = L-aspartyl-tRNA(Asx) + AMP + diphosphate. In terms of biological role, aspartyl-tRNA synthetase with relaxed tRNA specificity since it is able to aspartylate not only its cognate tRNA(Asp) but also tRNA(Asn). Reaction proceeds in two steps: L-aspartate is first activated by ATP to form Asp-AMP and then transferred to the acceptor end of tRNA(Asp/Asn). The chain is Aspartate--tRNA(Asp/Asn) ligase from Pseudomonas savastanoi pv. phaseolicola (strain 1448A / Race 6) (Pseudomonas syringae pv. phaseolicola (strain 1448A / Race 6)).